The following is a 154-amino-acid chain: Putative pre-16S rRNA nuclease (154 aa).

Belongs to the YqgF nuclease family.

It localises to the cytoplasm. Could be a nuclease involved in processing of the 5'-end of pre-16S rRNA. This is Putative pre-16S rRNA nuclease from Pelotomaculum thermopropionicum (strain DSM 13744 / JCM 10971 / SI).